The chain runs to 573 residues: Putative adenine deaminase PTO1085 (573 aa).

Belongs to the metallo-dependent hydrolases superfamily. Adenine deaminase family.

The enzyme catalyses adenine + H2O + H(+) = hypoxanthine + NH4(+). The protein is Putative adenine deaminase PTO1085 of Picrophilus torridus (strain ATCC 700027 / DSM 9790 / JCM 10055 / NBRC 100828 / KAW 2/3).